The primary structure comprises 50 residues: uncharacterized protein (50 aa).

Residues 28–50 are disordered; the sequence is SKLSPVTNGGKTIGKSNKVSKND. Residues 29–50 are compositionally biased toward polar residues; that stretch reads KLSPVTNGGKTIGKSNKVSKND.

This is an uncharacterized protein from Haemophilus influenzae (strain ATCC 51907 / DSM 11121 / KW20 / Rd).